A 328-amino-acid chain; its full sequence is Tetraacyldisaccharide 4'-kinase (328 aa).

ATP is bound at residue 55–62 (TAGGNGKT).

The protein belongs to the LpxK family.

The catalysed reaction is a lipid A disaccharide + ATP = a lipid IVA + ADP + H(+). Its pathway is glycolipid biosynthesis; lipid IV(A) biosynthesis; lipid IV(A) from (3R)-3-hydroxytetradecanoyl-[acyl-carrier-protein] and UDP-N-acetyl-alpha-D-glucosamine: step 6/6. Functionally, transfers the gamma-phosphate of ATP to the 4'-position of a tetraacyldisaccharide 1-phosphate intermediate (termed DS-1-P) to form tetraacyldisaccharide 1,4'-bis-phosphate (lipid IVA). This chain is Tetraacyldisaccharide 4'-kinase, found in Escherichia coli O6:K15:H31 (strain 536 / UPEC).